Reading from the N-terminus, the 490-residue chain is Probable glycine dehydrogenase (decarboxylating) subunit 2 (490 aa).

Lys-273 carries the post-translational modification N6-(pyridoxal phosphate)lysine.

It belongs to the GcvP family. C-terminal subunit subfamily. In terms of assembly, the glycine cleavage system is composed of four proteins: P, T, L and H. In this organism, the P 'protein' is a heterodimer of two subunits. Pyridoxal 5'-phosphate is required as a cofactor.

It carries out the reaction N(6)-[(R)-lipoyl]-L-lysyl-[glycine-cleavage complex H protein] + glycine + H(+) = N(6)-[(R)-S(8)-aminomethyldihydrolipoyl]-L-lysyl-[glycine-cleavage complex H protein] + CO2. Functionally, the glycine cleavage system catalyzes the degradation of glycine. The P protein binds the alpha-amino group of glycine through its pyridoxal phosphate cofactor; CO(2) is released and the remaining methylamine moiety is then transferred to the lipoamide cofactor of the H protein. The protein is Probable glycine dehydrogenase (decarboxylating) subunit 2 of Staphylococcus aureus (strain Newman).